A 155-amino-acid polypeptide reads, in one-letter code: 3-hydroxyacyl-[acyl-carrier-protein] dehydratase FabZ (155 aa).

The active site involves His57.

The protein belongs to the thioester dehydratase family. FabZ subfamily.

The protein resides in the cytoplasm. The catalysed reaction is a (3R)-hydroxyacyl-[ACP] = a (2E)-enoyl-[ACP] + H2O. Functionally, involved in unsaturated fatty acids biosynthesis. Catalyzes the dehydration of short chain beta-hydroxyacyl-ACPs and long chain saturated and unsaturated beta-hydroxyacyl-ACPs. In Cereibacter sphaeroides (strain KD131 / KCTC 12085) (Rhodobacter sphaeroides), this protein is 3-hydroxyacyl-[acyl-carrier-protein] dehydratase FabZ.